A 174-amino-acid polypeptide reads, in one-letter code: Mitochondrial holo-[acyl-carrier-protein] synthase (174 aa).

Belongs to the P-Pant transferase superfamily. AcpS family.

The protein localises to the mitochondrion. The enzyme catalyses apo-[ACP] + CoA = holo-[ACP] + adenosine 3',5'-bisphosphate + H(+). In terms of biological role, transfers the 4'-phosphopantetheine moiety from coenzyme A to a Ser of mitochondrial acyl-carrier-protein. This chain is Mitochondrial holo-[acyl-carrier-protein] synthase (PPT2), found in Eremothecium gossypii (strain ATCC 10895 / CBS 109.51 / FGSC 9923 / NRRL Y-1056) (Yeast).